We begin with the raw amino-acid sequence, 28 residues long: Dermaseptin-1 (28 aa).

Gln28 is modified (glutamine amide).

Expressed by the skin glands.

It is found in the secreted. In terms of biological role, has antimicrobial activity. The protein is Dermaseptin-1 of Phyllomedusa tomopterna (Tiger-striped leaf frog).